An 82-amino-acid chain; its full sequence is Small ribosomal subunit protein bS16 (82 aa).

This sequence belongs to the bacterial ribosomal protein bS16 family.

In Alcanivorax borkumensis (strain ATCC 700651 / DSM 11573 / NCIMB 13689 / SK2), this protein is Small ribosomal subunit protein bS16.